We begin with the raw amino-acid sequence, 251 residues long: ATP synthase subunit a (251 aa).

A run of 5 helical transmembrane segments spans residues 28-48 (TDTV…AFFL), 84-104 (IAPF…ISNW), 130-150 (INYV…AGIW), 192-212 (IFAG…IMWA), and 220-240 (FDLF…ILYF).

This sequence belongs to the ATPase A chain family. As to quaternary structure, F-type ATPases have 2 components, CF(1) - the catalytic core - and CF(0) - the membrane proton channel. CF(1) has five subunits: alpha(3), beta(3), gamma(1), delta(1), epsilon(1). CF(0) has three main subunits: a(1), b(2) and c(9-12). The alpha and beta chains form an alternating ring which encloses part of the gamma chain. CF(1) is attached to CF(0) by a central stalk formed by the gamma and epsilon chains, while a peripheral stalk is formed by the delta and b chains.

Its subcellular location is the cell membrane. Its function is as follows. Key component of the proton channel; it plays a direct role in the translocation of protons across the membrane. In Mycobacterium leprae (strain TN), this protein is ATP synthase subunit a.